An 832-amino-acid chain; its full sequence is MPLSYQHFRKLLLLDNEAGPLEEELPRLADEDLNRRVAEDLNLGNLNVSIPWTHKVGNFTGLYSSSVPVFNPHWKTPSFPNIHLHQDIIKKCEQFVGPLTVNEKRRLKLIMPARFYPNFTKYLPLDKGIKPYYPEHLVNHYFHTRHYLHTLWKAGILYKRVSTHSASFCGSPYSWEQELQHGAESFHQQSSGILSRPSVGSSLQSKHQQSRLGLQSQQGHLARRQQGRSWSIRTRVHPTARRPSGVEPSGSGHNANLASKSASCLYQSTVRTAAYPAVSTSENHSSSGHAVELHNLPPNSARSQSERPVSPCWWLQFRNSKPCSDYCLSHIVNLLEDWGPCAEHGEHHIRIPRTPARVTGGVFLVDKNPHNTAESRLVVDFSQFSRGNYRVSWPKFAVPNLQSLTNLLSSNLCWLSLDVSAAFYHLPLHPAAMPHLLVGSSGLSRYVARLSSNSRIINHQHGTLQNLHDSCSRNLYVSLLLLYKTFGWKLHLYSHPIILGFRKIPMGVGLSPFLLAQFTSAICSVVRRAFPHCLAFSYMDDVVLGAKSVQHLESLFTAVTNFLLSLGIHLNPNKTKRWGYSLNFMGYVIGSWGSLPQDHIRHKIKECFRKLPVHRPIDWKVCQRIVGLLGFAAPFTQCGYPALMPLYACIQSKQAFTFSPTYKAFLCKQYLNLYPVARQRPGLCQVFADATPTGWGLVMGHQRMRGTFSAPLPIHTAELLAACFARSRSGANILGTDNSVVLSRKYTSFPWLLGCAANWILRGTSFVYVPSALNPADDPSRGRLGPCRPLLHLPFRPTTGRTSLYADSPSVPSHLPDRVHFASPLHVAWRPP.

Positions 1–177 (MPLSYQHFRK…FCGSPYSWEQ (177 aa)) are terminal protein domain (TP). Positions 178-335 (ELQHGAESFH…YCLSHIVNLL (158 aa)) are spacer. Residues 186 to 206 (FHQQSSGILSRPSVGSSLQSK) show a composition bias toward polar residues. Disordered stretches follow at residues 186 to 255 (FHQQ…GHNA) and 280 to 305 (TSEN…RSQS). The span at 210-220 (SRLGLQSQQGH) shows a compositional bias: low complexity. Residues 336-679 (EDWGPCAEHG…YLNLYPVARQ (344 aa)) are polymerase/reverse transcriptase domain (RT). The 244-residue stretch at 346-589 (EHHIRIPRTP…YSLNFMGYVI (244 aa)) folds into the Reverse transcriptase domain. Positions 418, 540, and 541 each coordinate Mg(2+).

It belongs to the hepadnaviridae P protein family.

It catalyses the reaction DNA(n) + a 2'-deoxyribonucleoside 5'-triphosphate = DNA(n+1) + diphosphate. The enzyme catalyses Endonucleolytic cleavage to 5'-phosphomonoester.. With respect to regulation, activated by host HSP70 and HSP40 in vitro to be able to bind the epsilon loop of the pgRNA. Because deletion of the RNase H region renders the protein partly chaperone-independent, the chaperones may be needed indirectly to relieve occlusion of the RNA-binding site by this domain. Inhibited by several reverse-transcriptase inhibitors: Lamivudine, Adefovir and Entecavir. Functionally, multifunctional enzyme that converts the viral RNA genome into dsDNA in viral cytoplasmic capsids. This enzyme displays a DNA polymerase activity that can copy either DNA or RNA templates, and a ribonuclease H (RNase H) activity that cleaves the RNA strand of RNA-DNA heteroduplexes in a partially processive 3'- to 5'-endonucleasic mode. Neo-synthesized pregenomic RNA (pgRNA) are encapsidated together with the P protein, and reverse-transcribed inside the nucleocapsid. Initiation of reverse-transcription occurs first by binding the epsilon loop on the pgRNA genome, and is initiated by protein priming, thereby the 5'-end of (-)DNA is covalently linked to P protein. Partial (+)DNA is synthesized from the (-)DNA template and generates the relaxed circular DNA (RC-DNA) genome. After budding and infection, the RC-DNA migrates in the nucleus, and is converted into a plasmid-like covalently closed circular DNA (cccDNA). The activity of P protein does not seem to be necessary for cccDNA generation, and is presumably released from (+)DNA by host nuclear DNA repair machinery. The chain is Protein P from Hepatitis B virus genotype D subtype ayw (isolate Australia/AustKW/1991) (HBV-D).